Reading from the N-terminus, the 427-residue chain is Glutamate-1-semialdehyde 2,1-aminomutase (427 aa).

An N6-(pyridoxal phosphate)lysine modification is found at K266.

Belongs to the class-III pyridoxal-phosphate-dependent aminotransferase family. HemL subfamily. In terms of assembly, homodimer. Pyridoxal 5'-phosphate serves as cofactor.

Its subcellular location is the cytoplasm. The enzyme catalyses (S)-4-amino-5-oxopentanoate = 5-aminolevulinate. It participates in porphyrin-containing compound metabolism; protoporphyrin-IX biosynthesis; 5-aminolevulinate from L-glutamyl-tRNA(Glu): step 2/2. This is Glutamate-1-semialdehyde 2,1-aminomutase from Dechloromonas aromatica (strain RCB).